The chain runs to 150 residues: Ribonuclease H (150 aa).

The region spanning 1–146 (MPELFAYTDG…ADELARAGMA (146 aa)) is the RNase H type-1 domain. Mg(2+)-binding residues include Asp-9, Glu-52, Asp-74, and Asp-138.

It belongs to the RNase H family. Monomer. Mg(2+) is required as a cofactor.

The protein resides in the cytoplasm. The catalysed reaction is Endonucleolytic cleavage to 5'-phosphomonoester.. Functionally, endonuclease that specifically degrades the RNA of RNA-DNA hybrids. The polypeptide is Ribonuclease H (Roseobacter denitrificans (strain ATCC 33942 / OCh 114) (Erythrobacter sp. (strain OCh 114))).